The chain runs to 330 residues: Ketol-acid reductoisomerase (NADP(+)) (330 aa).

A KARI N-terminal Rossmann domain is found at 1–181 (MNVYYEQDAD…GGTKAGVIET (181 aa)). NADP(+) is bound by residues 24–27 (YGSQ), Arg47, Ser50, Ser52, and 82–85 (DQTQ). His107 is a catalytic residue. Gly133 contacts NADP(+). In terms of domain architecture, KARI C-terminal knotted spans 182-327 (NFKDETETDL…AKLRNMMSWL (146 aa)). Mg(2+)-binding residues include Asp190, Glu194, Glu226, and Glu230. Ser251 serves as a coordination point for substrate.

It belongs to the ketol-acid reductoisomerase family. Mg(2+) serves as cofactor.

It carries out the reaction (2R)-2,3-dihydroxy-3-methylbutanoate + NADP(+) = (2S)-2-acetolactate + NADPH + H(+). The catalysed reaction is (2R,3R)-2,3-dihydroxy-3-methylpentanoate + NADP(+) = (S)-2-ethyl-2-hydroxy-3-oxobutanoate + NADPH + H(+). The protein operates within amino-acid biosynthesis; L-isoleucine biosynthesis; L-isoleucine from 2-oxobutanoate: step 2/4. Its pathway is amino-acid biosynthesis; L-valine biosynthesis; L-valine from pyruvate: step 2/4. Its function is as follows. Involved in the biosynthesis of branched-chain amino acids (BCAA). Catalyzes an alkyl-migration followed by a ketol-acid reduction of (S)-2-acetolactate (S2AL) to yield (R)-2,3-dihydroxy-isovalerate. In the isomerase reaction, S2AL is rearranged via a Mg-dependent methyl migration to produce 3-hydroxy-3-methyl-2-ketobutyrate (HMKB). In the reductase reaction, this 2-ketoacid undergoes a metal-dependent reduction by NADPH to yield (R)-2,3-dihydroxy-isovalerate. In Chlorobium luteolum (strain DSM 273 / BCRC 81028 / 2530) (Pelodictyon luteolum), this protein is Ketol-acid reductoisomerase (NADP(+)).